The chain runs to 91 residues: Putative regulatory protein PTH_1796 (91 aa).

It belongs to the RemA family.

In Pelotomaculum thermopropionicum (strain DSM 13744 / JCM 10971 / SI), this protein is Putative regulatory protein PTH_1796.